We begin with the raw amino-acid sequence, 428 residues long: Dihydroorotase (428 aa).

Zn(2+) is bound by residues H59 and H61. Substrate-binding positions include 61–63 (HLR) and N93. The Zn(2+) site is built by D151, H178, and H231. N277 lines the substrate pocket. D304 lines the Zn(2+) pocket. Residue D304 is part of the active site. Substrate contacts are provided by residues H308 and 322–323 (FG).

Belongs to the metallo-dependent hydrolases superfamily. DHOase family. Class I DHOase subfamily. Zn(2+) is required as a cofactor.

It catalyses the reaction (S)-dihydroorotate + H2O = N-carbamoyl-L-aspartate + H(+). It functions in the pathway pyrimidine metabolism; UMP biosynthesis via de novo pathway; (S)-dihydroorotate from bicarbonate: step 3/3. Functionally, catalyzes the reversible cyclization of carbamoyl aspartate to dihydroorotate. This Bacillus anthracis (strain A0248) protein is Dihydroorotase.